Reading from the N-terminus, the 329-residue chain is GTPase Obg (329 aa).

One can recognise an Obg domain in the interval 1-159; the sequence is MQFIDYAEIE…RWLRLELKLL (159 aa). An OBG-type G domain is found at 160–328; sequence AEVGIIGLPN…LLQIVWQLLD (169 aa). Residues 166 to 173, 191 to 195, 213 to 216, 280 to 283, and 309 to 311 each bind GTP; these read GLPNAGKS, FTTLV, DIPG, NKMD, and SGV. Positions 173 and 193 each coordinate Mg(2+).

Belongs to the TRAFAC class OBG-HflX-like GTPase superfamily. OBG GTPase family. As to quaternary structure, monomer. Mg(2+) is required as a cofactor.

It is found in the cytoplasm. Its function is as follows. An essential GTPase which binds GTP, GDP and possibly (p)ppGpp with moderate affinity, with high nucleotide exchange rates and a fairly low GTP hydrolysis rate. Plays a role in control of the cell cycle, stress response, ribosome biogenesis and in those bacteria that undergo differentiation, in morphogenesis control. The protein is GTPase Obg of Rippkaea orientalis (strain PCC 8801 / RF-1) (Cyanothece sp. (strain PCC 8801)).